A 363-amino-acid polypeptide reads, in one-letter code: Peroxisomal (S)-2-hydroxyacid oxidase GLO4 (363 aa).

Residues 1–357 (MDQIVNVDEF…TRNHVRTENE (357 aa)) form the FMN hydroxy acid dehydrogenase domain. FMN-binding positions include 78–80 (PTA), S107, 128–130 (QIY), and T156. Y130 provides a ligand contact to a 2-oxocarboxylate. R165 is an a 2-oxocarboxylate binding site. K228 and S250 together coordinate FMN. The active-site Proton acceptor is the H252. R255 is a binding site for a 2-oxocarboxylate. FMN contacts are provided by residues 283 to 287 (DGGVR) and 306 to 307 (GR). Residues 361–363 (SML) carry the Microbody targeting signal motif.

Belongs to the FMN-dependent alpha-hydroxy acid dehydrogenase family. As to quaternary structure, homotetramer. FMN is required as a cofactor.

It localises to the peroxisome. The catalysed reaction is a (2S)-2-hydroxycarboxylate + O2 = a 2-oxocarboxylate + H2O2. It catalyses the reaction 2-hydroxydodecanoate + O2 = 2-oxododecanoate + H2O2. It carries out the reaction 2-hydroxyhexanoate + O2 = 2-oxohexanoate + H2O2. The enzyme catalyses 2-hydroxyoctanoate + O2 = 2-oxooctanoate + H2O2. The catalysed reaction is (S)-lactate + O2 = pyruvate + H2O2. The protein operates within lipid metabolism; fatty acid metabolism. Functionally, oxidase that catalyzes the oxidation of a broad range of 2-hydroxyacids to the corresponding 2-oxoacids, with a reduction of O2 to H2O2. Displays the highest activity with the long-chain fatty acid 2-hydroxydodecanoate and has intermediate activity with 2-hydroxyhexanoate, 2-hydroxyoctanote, and the short-chain hydroxyacid (S)-lactate (L-lactate). With much lower activity, it can also use glycolate, leucic acid, valic acid, and isoleucic acid as substrates in vitro. Cannot use 2-hydroxyhexadecanoate or D-lactate as substrates. May be involved in a general medium- and long-chain fatty acid catabolic pathway such as alpha-oxidation. This chain is Peroxisomal (S)-2-hydroxyacid oxidase GLO4 (GLO4), found in Arabidopsis thaliana (Mouse-ear cress).